The primary structure comprises 394 residues: 4-hydroxybenzoate 3-monooxygenase (NAD(P)H) (394 aa).

FAD is bound by residues E32, 42-47, and Q102; that span reads TIRAGV. Residues Y203, 214–216, and Y224 each bind substrate; that span reads STR. FAD is bound at residue D288. P295 contacts substrate. 301–302 serves as a coordination point for FAD; it reads LN.

Belongs to the aromatic-ring hydroxylase family. It depends on FAD as a cofactor.

It catalyses the reaction 4-hydroxybenzoate + NADH + O2 + H(+) = 3,4-dihydroxybenzoate + NAD(+) + H2O. The catalysed reaction is 4-hydroxybenzoate + NADPH + O2 + H(+) = 3,4-dihydroxybenzoate + NADP(+) + H2O. Functionally, involved in the degradation of 4-hydroxybenzoate (4HB) via the protocatechuate (PCA) 2,3-cleavage pathway. Catalyzes the conversion of 4HB into 2-hydroxypenta-2,4-dienoate (HPD). It is highly specific for 4-hydroxybenzoate, and is able to utilize both NADH and NADPH as electron donors at approximately equal rates. The chain is 4-hydroxybenzoate 3-monooxygenase (NAD(P)H) (praI) from Paenibacillus sp.